The primary structure comprises 198 residues: Glycerol-3-phosphate acyltransferase (198 aa).

5 helical membrane-spanning segments follow: residues 4–24, 53–75, 80–102, 112–132, and 134–154; these read LALI…AVLI, SAAG…GGYF, PFML…FFHF, LGAL…CWVV, and VLVT…APLF.

This sequence belongs to the PlsY family. As to quaternary structure, probably interacts with PlsX.

It is found in the cell inner membrane. It carries out the reaction an acyl phosphate + sn-glycerol 3-phosphate = a 1-acyl-sn-glycero-3-phosphate + phosphate. It functions in the pathway lipid metabolism; phospholipid metabolism. Catalyzes the transfer of an acyl group from acyl-phosphate (acyl-PO(4)) to glycerol-3-phosphate (G3P) to form lysophosphatidic acid (LPA). This enzyme utilizes acyl-phosphate as fatty acyl donor, but not acyl-CoA or acyl-ACP. The protein is Glycerol-3-phosphate acyltransferase of Aliivibrio fischeri (strain ATCC 700601 / ES114) (Vibrio fischeri).